The primary structure comprises 306 residues: D-alanine--D-alanine ligase (306 aa).

Active-site residues include Glu-15 and Ser-150. Residues 101-303 form the ATP-grasp domain; the sequence is KLLWKSLSLR…FDELILKILK (203 aa). 134–189 contributes to the ATP binding site; that stretch reads ILKLKFPVVIKPNNAGSSIGITIVNHPDLLIDSINLAFNYSNNIIIEKFLKGTEYT. Mg(2+)-binding residues include Asp-257, Glu-270, and Asn-272. Ser-281 is a catalytic residue.

The protein belongs to the D-alanine--D-alanine ligase family. Mg(2+) is required as a cofactor. It depends on Mn(2+) as a cofactor.

It is found in the cytoplasm. The enzyme catalyses 2 D-alanine + ATP = D-alanyl-D-alanine + ADP + phosphate + H(+). The protein operates within cell wall biogenesis; peptidoglycan biosynthesis. Its function is as follows. Cell wall formation. The protein is D-alanine--D-alanine ligase of Buchnera aphidicola subsp. Schizaphis graminum (strain Sg).